The sequence spans 473 residues: Photosystem II CP43 reaction center protein (473 aa).

Residues 1–14 constitute a propeptide that is removed on maturation; it reads MKILYSLRRYFHVE. Thr15 carries the post-translational modification N-acetylthreonine. Thr15 bears the Phosphothreonine mark. 5 helical membrane-spanning segments follow: residues 69 to 93, 134 to 155, 178 to 200, 255 to 275, and 291 to 312; these read LFEV…PHLA, LIGP…KDKN, KAIW…RKIT, KPFA…LSYS, and WFNN…ASQA. Residue Glu367 participates in [CaMn4O5] cluster binding. The helical transmembrane segment at 447–471 threads the bilayer; it reads RARAAAAGFEKGIDRDSEPVLYMEP.

Belongs to the PsbB/PsbC family. PsbC subfamily. As to quaternary structure, PSII is composed of 1 copy each of membrane proteins PsbA, PsbB, PsbC, PsbD, PsbE, PsbF, PsbH, PsbI, PsbJ, PsbK, PsbL, PsbM, PsbT, PsbX, PsbY, PsbZ, Psb30/Ycf12, at least 3 peripheral proteins of the oxygen-evolving complex and a large number of cofactors. It forms dimeric complexes. Requires Binds multiple chlorophylls and provides some of the ligands for the Ca-4Mn-5O cluster of the oxygen-evolving complex. It may also provide a ligand for a Cl- that is required for oxygen evolution. PSII binds additional chlorophylls, carotenoids and specific lipids. as cofactor.

Its subcellular location is the plastid. It localises to the chloroplast thylakoid membrane. In terms of biological role, one of the components of the core complex of photosystem II (PSII). It binds chlorophyll and helps catalyze the primary light-induced photochemical processes of PSII. PSII is a light-driven water:plastoquinone oxidoreductase, using light energy to abstract electrons from H(2)O, generating O(2) and a proton gradient subsequently used for ATP formation. The polypeptide is Photosystem II CP43 reaction center protein (Chara vulgaris (Common stonewort)).